A 325-amino-acid polypeptide reads, in one-letter code: MKTPELMAIWQRLKTACLVAIATFGLFFASDVLFPQAAAAYPFWAQQTAPETPREATGRIVCANCHLAAKEAEVEIPQSVLPDQVFEAVVKIPYDHSQQQVLGDGSKGGLNVGAVLMLPDGFKIAPADRLSDELKEKTEGLYFQSYAPDQENVVIIGPISGDQYEEIVFPVLSPDPKTDKNINYGKYAVHLGANRGRGQVYPTGELSNNNQFKASATGTITNIAVNEAAGTDITISTEAGEVIDTIPAGPEVIVSEGQAIAAGEALTNNPNVGGFGQKDTEVVLQNPARIYGYMAFVAGIMLTQIFLVLKKKQVERVQAAGQLDF.

The N-terminal stretch at 1–40 is a signal peptide; the sequence is MKTPELMAIWQRLKTACLVAIATFGLFFASDVLFPQAAAA. Heme contacts are provided by Tyr-41, Cys-62, Cys-65, and His-66. The helical transmembrane segment at 290–309 threads the bilayer; the sequence is IYGYMAFVAGIMLTQIFLVL.

This sequence belongs to the cytochrome f family. In terms of assembly, the 4 large subunits of the cytochrome b6-f complex are cytochrome b6, subunit IV (17 kDa polypeptide, PetD), cytochrome f and the Rieske protein, while the 4 small subunits are PetG, PetL, PetM and PetN. The complex functions as a dimer. Requires heme as cofactor.

Its subcellular location is the cellular thylakoid membrane. Component of the cytochrome b6-f complex, which mediates electron transfer between photosystem II (PSII) and photosystem I (PSI), cyclic electron flow around PSI, and state transitions. This is Cytochrome f (petA) from Picosynechococcus sp. (strain ATCC 27264 / PCC 7002 / PR-6) (Agmenellum quadruplicatum).